The chain runs to 133 residues: Fatty acid-binding protein, heart (133 aa).

Valine 2 carries the post-translational modification N-acetylvaline. Threonine 8 is subject to Phosphothreonine. Tyrosine 20 is subject to Phosphotyrosine; by Tyr-kinases. Serine 23 is subject to Phosphoserine. Threonine 30 is modified (phosphothreonine). Serine 83 is subject to Phosphoserine. 127–129 (RTY) is a (9Z)-octadecenoate binding site. 127–129 (RTY) contacts hexadecanoate. Residue 127–129 (RTY) coordinates octadecanoate.

The protein belongs to the calycin superfamily. Fatty-acid binding protein (FABP) family.

The protein resides in the cytoplasm. In terms of biological role, FABPs are thought to play a role in the intracellular transport of long-chain fatty acids and their acyl-CoA esters. The chain is Fatty acid-binding protein, heart (FABP3) from Bos mutus grunniens (Wild yak).